The sequence spans 426 residues: Probable auxin efflux carrier component 9 (426 aa).

The Extracellular portion of the chain corresponds to 1 to 6 (MITGSE). The helical transmembrane segment at 7 to 27 (VYQVVEAMAPLYTAAALGYGS) threads the bilayer. The Cytoplasmic portion of the chain corresponds to 28-38 (VRWLKAFSNEQ). The helical transmembrane segment at 39–59 (CAGINHFVALYAVPVLIFDMV) threads the bilayer. Residue valine 51 coordinates (indol-3-yl)acetate. The Extracellular segment spans residues 60–70 (STNNVYKMNGR). Residues 71–91 (LIAADTLQKAVLLLGLMAWAL) form a helical membrane-spanning segment. The Cytoplasmic segment spans residues 92–114 (WERSRARGAGAKAKAAVSSPLQW). The helical transmembrane segment at 115-135 (VITCFSVASLPNTIIMGVPLL) threads the bilayer. Asparagine 126 and isoleucine 128 together coordinate (indol-3-yl)acetate. Over 136 to 145 (NGMYGPVSKD) the chain is Extracellular. A helical membrane pass occupies residues 146 to 166 (LMKQIVVMQFCIWYNVIIFLY). (indol-3-yl)acetate is bound at residue tyrosine 159. At 167 to 286 (EYMAARRSAS…LLQIPNTYAS (120 aa)) the chain is on the cytoplasmic side. Residues 232–258 (RDGVSGETTAAAKEVSSGEVAPVEEEE) are disordered. The chain crosses the membrane as a helical span at residues 287-307 (FLGLIWSLIAFKCGFSMPKIV). Residues 308-310 (EDS) lie on the Extracellular side of the membrane. The chain crosses the membrane as a helical span at residues 311–331 (LFTIRTTAVGLSMFSSGTFIA). Over 332–347 (RQSRFVPCGYKIASFS) the chain is Cytoplasmic. A helical transmembrane segment spans residues 348 to 368 (MVIKFLIGPVVMLFASLVIGM). Topologically, residues 369–371 (HGT) are extracellular. Residues 372–392 (LLHIAVVQAALPLAVTSFVYA) form a helical membrane-spanning segment. Valine 386 is a binding site for (indol-3-yl)acetate. Residues 393-405 (EEYKVHADIMSTG) lie on the Cytoplasmic side of the membrane. A helical transmembrane segment spans residues 406–426 (VILGIFISLPVTIVYYILLGL).

Belongs to the auxin efflux carrier (TC 2.A.69.1) family. Homodimer. Expressed in roots, leaves and shoot apex. Expressed in roots, stem bases, stems, leaves and young panicles.

It is found in the membrane. May act as a component of the auxin efflux carrier. In Oryza sativa subsp. japonica (Rice), this protein is Probable auxin efflux carrier component 9.